The sequence spans 867 residues: Alanine--tRNA ligase (867 aa).

The Zn(2+) site is built by histidine 554, histidine 558, cysteine 656, and histidine 660.

The protein belongs to the class-II aminoacyl-tRNA synthetase family. The cofactor is Zn(2+).

Its subcellular location is the cytoplasm. The catalysed reaction is tRNA(Ala) + L-alanine + ATP = L-alanyl-tRNA(Ala) + AMP + diphosphate. In terms of biological role, catalyzes the attachment of alanine to tRNA(Ala) in a two-step reaction: alanine is first activated by ATP to form Ala-AMP and then transferred to the acceptor end of tRNA(Ala). Also edits incorrectly charged Ser-tRNA(Ala) and Gly-tRNA(Ala) via its editing domain. The polypeptide is Alanine--tRNA ligase (Methylococcus capsulatus (strain ATCC 33009 / NCIMB 11132 / Bath)).